Reading from the N-terminus, the 481-residue chain is 3-isopropylmalate dehydratase large subunit (481 aa).

Residues Cys355, Cys415, and Cys418 each contribute to the [4Fe-4S] cluster site.

Belongs to the aconitase/IPM isomerase family. LeuC type 1 subfamily. Heterodimer of LeuC and LeuD. The cofactor is [4Fe-4S] cluster.

The enzyme catalyses (2R,3S)-3-isopropylmalate = (2S)-2-isopropylmalate. It functions in the pathway amino-acid biosynthesis; L-leucine biosynthesis; L-leucine from 3-methyl-2-oxobutanoate: step 2/4. Catalyzes the isomerization between 2-isopropylmalate and 3-isopropylmalate, via the formation of 2-isopropylmaleate. The polypeptide is 3-isopropylmalate dehydratase large subunit (Symbiobacterium thermophilum (strain DSM 24528 / JCM 14929 / IAM 14863 / T)).